The following is a 229-amino-acid chain: Extracellular endonuclease (229 aa).

Positions 1–19 (MSARFIAVFCLFFTVTAHA) are cleaved as a signal peptide. The disordered stretch occupies residues 69–95 (RADASNGNTSSRPGRSGISASAGKPVG). Residues 71–81 (DASNGNTSSRP) show a composition bias toward polar residues.

Belongs to the EndA/NucM nuclease family.

The protein resides in the secreted. In Pseudomonas fluorescens biotype A, this protein is Extracellular endonuclease (endX).